We begin with the raw amino-acid sequence, 355 residues long: Hydroxylysine kinase (355 aa).

The active-site Proton acceptor is Asp215.

The protein belongs to the aminoglycoside phosphotransferase family.

Its subcellular location is the cytoplasm. It carries out the reaction (5R)-5-hydroxy-L-lysine + GTP = (5R)-5-phosphooxy-L-lysine + GDP + H(+). Catalyzes the GTP-dependent phosphorylation of 5-hydroxy-L-lysine. The polypeptide is Hydroxylysine kinase (hykk) (Danio rerio (Zebrafish)).